The following is a 202-amino-acid chain: Small ribosomal subunit protein uS5 (202 aa).

Gly residues predominate over residues Met1 to Gly13. Positions Met1 to Lys31 are disordered. Residues Ser14–Ser23 are compositionally biased toward basic and acidic residues. Residues Tyr34 to Val97 enclose the S5 DRBM domain.

Belongs to the universal ribosomal protein uS5 family. Part of the 30S ribosomal subunit. Contacts proteins S4 and S8.

In terms of biological role, with S4 and S12 plays an important role in translational accuracy. Its function is as follows. Located at the back of the 30S subunit body where it stabilizes the conformation of the head with respect to the body. This Parafrankia sp. (strain EAN1pec) protein is Small ribosomal subunit protein uS5.